Consider the following 391-residue polypeptide: Aspartate aminotransferase (391 aa).

L-aspartate contacts are provided by Gly40 and Asn176. Lys236 is modified (N6-(pyridoxal phosphate)lysine). Arg366 serves as a coordination point for L-aspartate.

The protein belongs to the class-I pyridoxal-phosphate-dependent aminotransferase family. In terms of assembly, homodimer. Pyridoxal 5'-phosphate is required as a cofactor.

Its subcellular location is the cytoplasm. The enzyme catalyses L-aspartate + 2-oxoglutarate = oxaloacetate + L-glutamate. The sequence is that of Aspartate aminotransferase (aspC) from Pyrococcus horikoshii (strain ATCC 700860 / DSM 12428 / JCM 9974 / NBRC 100139 / OT-3).